Consider the following 758-residue polypeptide: GPI ethanolamine phosphate transferase 2 (758 aa).

Residues N28, N77, and N178 are each glycosylated (N-linked (GlcNAc...) asparagine). 3 helical membrane-spanning segments follow: residues 405–425 (LVAI…FRNL), 431–451 (LLAF…SSFI), and 455–472 (HVIW…QLLN). An N-linked (GlcNAc...) asparagine glycan is attached at N493. The next 6 membrane-spanning stretches (helical) occupy residues 533–553 (PSPI…MPII), 561–581 (PIIA…LLLI), 598–618 (LFIL…YDIW), 667–687 (IFAV…WWCL), 698–718 (VKTF…SCFI), and 733–753 (LLYN…ISTI).

Belongs to the PIGG/PIGN/PIGO family. PIGG subfamily.

It localises to the endoplasmic reticulum membrane. It functions in the pathway glycolipid biosynthesis; glycosylphosphatidylinositol-anchor biosynthesis. Ethanolamine phosphate transferase involved in glycosylphosphatidylinositol-anchor biosynthesis. Transfers ethanolamine phosphate to the GPI second mannose. The protein is GPI ethanolamine phosphate transferase 2 (las21) of Schizosaccharomyces pombe (strain 972 / ATCC 24843) (Fission yeast).